The chain runs to 350 residues: Biotin synthase (350 aa).

A Radical SAM core domain is found at Asn41–Ser265. Residues Cys56, Cys60, and Cys63 each contribute to the [4Fe-4S] cluster site. [2Fe-2S] cluster contacts are provided by Cys100, Cys131, Cys191, and Arg263.

This sequence belongs to the radical SAM superfamily. Biotin synthase family. Homodimer. It depends on [4Fe-4S] cluster as a cofactor. [2Fe-2S] cluster serves as cofactor.

The catalysed reaction is (4R,5S)-dethiobiotin + (sulfur carrier)-SH + 2 reduced [2Fe-2S]-[ferredoxin] + 2 S-adenosyl-L-methionine = (sulfur carrier)-H + biotin + 2 5'-deoxyadenosine + 2 L-methionine + 2 oxidized [2Fe-2S]-[ferredoxin]. Its pathway is cofactor biosynthesis; biotin biosynthesis; biotin from 7,8-diaminononanoate: step 2/2. Its function is as follows. Catalyzes the conversion of dethiobiotin (DTB) to biotin by the insertion of a sulfur atom into dethiobiotin via a radical-based mechanism. This chain is Biotin synthase, found in Shewanella loihica (strain ATCC BAA-1088 / PV-4).